An 823-amino-acid polypeptide reads, in one-letter code: Aminopeptidase O (823 aa).

Position 481 (His-481) interacts with Zn(2+). The Proton acceptor role is filled by Glu-482. Zn(2+)-binding residues include His-485 and Glu-504. The Nucleolar localization signal motif lies at 693–703 (RRPRKRKRGKR).

It belongs to the peptidase M1 family. Zn(2+) is required as a cofactor. As to expression, expressed in testis, heart, brain, lung, liver, skeletal muscle, kidney and ovary. Expressed in vascular tissues.

It is found in the nucleus. It localises to the nucleolus. The protein resides in the cytoplasm. Its function is as follows. Aminopeptidase which catalyzes the hydrolysis of amino acid residues from the N-terminus of peptide or protein substrates. In Mus musculus (Mouse), this protein is Aminopeptidase O (Aopep).